We begin with the raw amino-acid sequence, 202 residues long: MARYRGPRLRITRRLGDLPGLTRKAAKRSYPPGQHGQARRKRSEYAIRLEEKQKLRFNYGVSERQLVRYVKKARAQEGSTGTNLLKLLENRLDNVCFRLGFGPTVPGARQLVNHGHVTVNGRVTDIASYQCKPGDVVAIRERKCSKQLAEGNLEFPGLANVPTHLELDKAKLSAKVTGRCEREWVALEINELLVVEYYSRKV.

The disordered stretch occupies residues 15–42 (LGDLPGLTRKAAKRSYPPGQHGQARRKR). Residues 90–152 (NRLDNVCFRL…KCSKQLAEGN (63 aa)) enclose the S4 RNA-binding domain.

The protein belongs to the universal ribosomal protein uS4 family. In terms of assembly, part of the 30S ribosomal subunit. Contacts protein S5. The interaction surface between S4 and S5 is involved in control of translational fidelity.

Functionally, one of the primary rRNA binding proteins, it binds directly to 16S rRNA where it nucleates assembly of the body of the 30S subunit. In terms of biological role, with S5 and S12 plays an important role in translational accuracy. The protein is Small ribosomal subunit protein uS4 of Parasynechococcus marenigrum (strain WH8102).